Reading from the N-terminus, the 157-residue chain is 6,7-dimethyl-8-ribityllumazine synthase (157 aa).

5-amino-6-(D-ribitylamino)uracil is bound by residues F30, 64–66, and 88–90; these read ALE and CII. 93–94 provides a ligand contact to (2S)-2-hydroxy-3-oxobutyl phosphate; the sequence is ET. Residue H96 is the Proton donor of the active site. Position 121 (N121) interacts with 5-amino-6-(D-ribitylamino)uracil. R135 contacts (2S)-2-hydroxy-3-oxobutyl phosphate.

The protein belongs to the DMRL synthase family.

It catalyses the reaction (2S)-2-hydroxy-3-oxobutyl phosphate + 5-amino-6-(D-ribitylamino)uracil = 6,7-dimethyl-8-(1-D-ribityl)lumazine + phosphate + 2 H2O + H(+). It functions in the pathway cofactor biosynthesis; riboflavin biosynthesis; riboflavin from 2-hydroxy-3-oxobutyl phosphate and 5-amino-6-(D-ribitylamino)uracil: step 1/2. Catalyzes the formation of 6,7-dimethyl-8-ribityllumazine by condensation of 5-amino-6-(D-ribitylamino)uracil with 3,4-dihydroxy-2-butanone 4-phosphate. This is the penultimate step in the biosynthesis of riboflavin. This is 6,7-dimethyl-8-ribityllumazine synthase from Albidiferax ferrireducens (strain ATCC BAA-621 / DSM 15236 / T118) (Rhodoferax ferrireducens).